We begin with the raw amino-acid sequence, 178 residues long: Ribulose bisphosphate carboxylase small subunit, chloroplastic (178 aa).

Residues 1 to 54 (MASISSSVATVSRTAPAQANMVAPFTGLKSNAAFPTTKKANDFSTLPSNGGRVQ) constitute a chloroplast transit peptide.

Belongs to the RuBisCO small chain family. As to quaternary structure, heterohexadecamer of 8 large and 8 small subunits.

The protein resides in the plastid. The protein localises to the chloroplast. In terms of biological role, ruBisCO catalyzes two reactions: the carboxylation of D-ribulose 1,5-bisphosphate, the primary event in carbon dioxide fixation, as well as the oxidative fragmentation of the pentose substrate. Both reactions occur simultaneously and in competition at the same active site. Although the small subunit is not catalytic it is essential for maximal activity. In Helianthus annuus (Common sunflower), this protein is Ribulose bisphosphate carboxylase small subunit, chloroplastic.